Reading from the N-terminus, the 345-residue chain is MRWKRTLQLLDVHCEGEIGRVVTGGAPKIPGNTVAEQLHWMNTDPQGEALRRFLTLEPRGTPMGSVDLLLPPKHPDAHAAFVILQPDQAHASSGSNSICATTALLESGMVEMQEPETVIILETAAGLVKATATCRDGRCEKVKLTMVPSFVHELDVSIDTPEWGRVTMDISYGGIFYALVDVRQIGLTIEKANAAKLVAAGMTLKDLVNREMTVVHPEIPAISGVAYVMFRDVDADGSIRTCTTMWPGRADRSPCGTGNSANLATLYARGKVKVGDEYKSRSIIGSEFDVGLSAVTEVAGRPAVIPTIAGRGFTFGLHQVGLDPFDPLGDGFAMTDVWGPEAGNI.

Glutamine 85 is a binding site for substrate. Serine 93 functions as the Proton acceptor in the catalytic mechanism. Substrate contacts are provided by residues 94–95 (GS) and aspartate 251. Cysteine 255 functions as the Proton donor in the catalytic mechanism. 256 to 257 (GT) lines the substrate pocket.

The protein belongs to the proline racemase family.

It carries out the reaction trans-4-hydroxy-L-proline = cis-4-hydroxy-D-proline. Its function is as follows. Catalyzes the epimerization of trans-4-hydroxy-L-proline (t4LHyp) to cis-4-hydroxy-D-proline (c4DHyp). May be involved in a degradation pathway of t4LHyp, which would allow A.tumefaciens to grow on t4LHyp as a sole carbon source. Can also catalyze the epimerization of trans-3-hydroxy-L-proline (t3LHyp) to cis-3-hydroxy-D-proline (c3DHyp) in vitro. Displays no proline racemase activity. This chain is 4-hydroxyproline 2-epimerase, found in Agrobacterium fabrum (strain C58 / ATCC 33970) (Agrobacterium tumefaciens (strain C58)).